The primary structure comprises 318 residues: Aspartate carbamoyltransferase catalytic subunit (318 aa).

The carbamoyl phosphate site is built by arginine 62 and threonine 63. L-aspartate is bound at residue lysine 90. The carbamoyl phosphate site is built by arginine 112, histidine 140, and glutamine 143. L-aspartate-binding residues include arginine 173 and arginine 227. Carbamoyl phosphate-binding residues include glycine 268 and proline 269.

Belongs to the aspartate/ornithine carbamoyltransferase superfamily. ATCase family. As to quaternary structure, heterododecamer (2C3:3R2) of six catalytic PyrB chains organized as two trimers (C3), and six regulatory PyrI chains organized as three dimers (R2).

It carries out the reaction carbamoyl phosphate + L-aspartate = N-carbamoyl-L-aspartate + phosphate + H(+). Its pathway is pyrimidine metabolism; UMP biosynthesis via de novo pathway; (S)-dihydroorotate from bicarbonate: step 2/3. Catalyzes the condensation of carbamoyl phosphate and aspartate to form carbamoyl aspartate and inorganic phosphate, the committed step in the de novo pyrimidine nucleotide biosynthesis pathway. The chain is Aspartate carbamoyltransferase catalytic subunit from Desulfotalea psychrophila (strain LSv54 / DSM 12343).